We begin with the raw amino-acid sequence, 368 residues long: Peptide chain release factor 2 (368 aa).

Glutamine 248 carries the N5-methylglutamine modification.

This sequence belongs to the prokaryotic/mitochondrial release factor family. In terms of processing, methylated by PrmC. Methylation increases the termination efficiency of RF2.

The protein localises to the cytoplasm. Its function is as follows. Peptide chain release factor 2 directs the termination of translation in response to the peptide chain termination codons UGA and UAA. The polypeptide is Peptide chain release factor 2 (Corynebacterium glutamicum (strain R)).